Here is a 430-residue protein sequence, read N- to C-terminus: Long-chain specific acyl-CoA dehydrogenase, mitochondrial (430 aa).

A mitochondrion-targeting transit peptide spans 1 to 30; that stretch reads MAARLLRGSLRFLGGHCAARPLPALRCSHS. Lys-42 bears the N6-acetyllysine mark. Phosphoserine occurs at positions 54 and 55. N6-acetyllysine; alternate is present on residues Lys-66 and Lys-81. 2 positions are modified to N6-succinyllysine; alternate: Lys-66 and Lys-81. An N6-acetyllysine mark is found at Lys-92 and Lys-95. N6-succinyllysine is present on Lys-165. FAD contacts are provided by residues 170–179 and 203–205; these read IAMTELGAGS and FIS. Ser-179 provides a ligand contact to substrate. 227 to 228 provides a ligand contact to substrate; the sequence is AR. An N6-succinyllysine modification is found at Lys-240. Residues Lys-254 and Lys-279 each carry the N6-acetyllysine; alternate modification. 2 positions are modified to N6-succinyllysine; alternate: Lys-254 and Lys-279. Substrate contacts are provided by residues Tyr-282 and 289-292; that span reads PQER. Glu-291 acts as the Proton acceptor in catalysis. Arg-317 is a binding site for FAD. Lys-318 carries the N6-acetyllysine modification. The residue at position 322 (Lys-322) is an N6-acetyllysine; alternate. Lys-322 is subject to N6-succinyllysine; alternate. Gln-328 serves as a coordination point for FAD. Lys-358 carries the post-translational modification N6-acetyllysine. Residue Ser-362 is modified to Phosphoserine. 385 to 389 is a binding site for FAD; sequence QLHGG. Residue 412-413 coordinates substrate; sequence GG. 414–416 lines the FAD pocket; that stretch reads TNE.

The protein belongs to the acyl-CoA dehydrogenase family. Homotetramer. FAD is required as a cofactor. Post-translationally, acetylation at Lys-318 and Lys-322 in proximity of the cofactor-binding sites strongly reduces catalytic activity. These sites are deacetylated by SIRT3.

It localises to the mitochondrion matrix. The enzyme catalyses a long-chain 2,3-saturated fatty acyl-CoA + oxidized [electron-transfer flavoprotein] + H(+) = a long-chain (2E)-enoyl-CoA + reduced [electron-transfer flavoprotein]. It carries out the reaction hexanoyl-CoA + oxidized [electron-transfer flavoprotein] + H(+) = (2E)-hexenoyl-CoA + reduced [electron-transfer flavoprotein]. It catalyses the reaction octanoyl-CoA + oxidized [electron-transfer flavoprotein] + H(+) = (2E)-octenoyl-CoA + reduced [electron-transfer flavoprotein]. The catalysed reaction is decanoyl-CoA + oxidized [electron-transfer flavoprotein] + H(+) = (2E)-decenoyl-CoA + reduced [electron-transfer flavoprotein]. The enzyme catalyses dodecanoyl-CoA + oxidized [electron-transfer flavoprotein] + H(+) = (2E)-dodecenoyl-CoA + reduced [electron-transfer flavoprotein]. It carries out the reaction tetradecanoyl-CoA + oxidized [electron-transfer flavoprotein] + H(+) = (2E)-tetradecenoyl-CoA + reduced [electron-transfer flavoprotein]. It catalyses the reaction oxidized [electron-transfer flavoprotein] + hexadecanoyl-CoA + H(+) = (2E)-hexadecenoyl-CoA + reduced [electron-transfer flavoprotein]. The catalysed reaction is octadecanoyl-CoA + oxidized [electron-transfer flavoprotein] + H(+) = (2E)-octadecenoyl-CoA + reduced [electron-transfer flavoprotein]. The enzyme catalyses eicosanoyl-CoA + oxidized [electron-transfer flavoprotein] + H(+) = (2E)-eicosenoyl-CoA + reduced [electron-transfer flavoprotein]. It carries out the reaction docosanoyl-CoA + oxidized [electron-transfer flavoprotein] + H(+) = (2E)-docosenoyl-CoA + reduced [electron-transfer flavoprotein]. It catalyses the reaction tetracosanoyl-CoA + oxidized [electron-transfer flavoprotein] + H(+) = (2E)-tetracosenoyl-CoA + reduced [electron-transfer flavoprotein]. The catalysed reaction is (5E)-tetradecenoyl-CoA + oxidized [electron-transfer flavoprotein] + H(+) = (2E,5E)-tetradecadienoyl-CoA + reduced [electron-transfer flavoprotein]. The enzyme catalyses (5Z)-tetradecenoyl-CoA + oxidized [electron-transfer flavoprotein] + H(+) = (2E,5Z)-tetradecadienoyl-CoA + reduced [electron-transfer flavoprotein]. It carries out the reaction oxidized [electron-transfer flavoprotein] + (9Z)-octadecenoyl-CoA + H(+) = (2E,9Z)-octadecadienoyl-CoA + reduced [electron-transfer flavoprotein]. The protein operates within lipid metabolism; mitochondrial fatty acid beta-oxidation. In terms of biological role, long-chain specific acyl-CoA dehydrogenase is one of the acyl-CoA dehydrogenases that catalyze the first step of mitochondrial fatty acid beta-oxidation, an aerobic process breaking down fatty acids into acetyl-CoA and allowing the production of energy from fats. The first step of fatty acid beta-oxidation consists in the removal of one hydrogen from C-2 and C-3 of the straight-chain fatty acyl-CoA thioester, resulting in the formation of trans-2-enoyl-CoA. Among the different mitochondrial acyl-CoA dehydrogenases, long-chain specific acyl-CoA dehydrogenase can act on saturated and unsaturated acyl-CoAs with 6 to 24 carbons with a preference for 8 to 18 carbons long primary chains. This chain is Long-chain specific acyl-CoA dehydrogenase, mitochondrial, found in Macaca fascicularis (Crab-eating macaque).